The sequence spans 205 residues: MRTIDKRIAPNVRLAATLVARAPALTLAYDARCKSRLAATLDTGEDVALVLPRGTVLRDGDVLVADDGALVRVAAAHEAVLLVRAPDALTLTRAAYHLGNRHTPVEVGAGCLKLEYDPVLADMLTRLGATVERASAPFQPEAGAYGGGHRHGHDATFAEDYALAQQVFDEHHGHSHSHSHDHDHDHDHDHQHGPCCSHGHHHGHR.

Positions 170-192 (EHHGHSHSHSHDHDHDHDHDHQH) are enriched in basic and acidic residues. The segment at 170–205 (EHHGHSHSHSHDHDHDHDHDHQHGPCCSHGHHHGHR) is disordered.

This sequence belongs to the UreE family.

It is found in the cytoplasm. In terms of biological role, involved in urease metallocenter assembly. Binds nickel. Probably functions as a nickel donor during metallocenter assembly. This is Urease accessory protein UreE from Burkholderia pseudomallei (strain 668).